Here is a 362-residue protein sequence, read N- to C-terminus: GTP cyclohydrolase FolE2 (362 aa).

This sequence belongs to the GTP cyclohydrolase IV family.

The enzyme catalyses GTP + H2O = 7,8-dihydroneopterin 3'-triphosphate + formate + H(+). Its pathway is cofactor biosynthesis; 7,8-dihydroneopterin triphosphate biosynthesis; 7,8-dihydroneopterin triphosphate from GTP: step 1/1. In terms of biological role, converts GTP to 7,8-dihydroneopterin triphosphate. The polypeptide is GTP cyclohydrolase FolE2 (Jannaschia sp. (strain CCS1)).